A 432-amino-acid polypeptide reads, in one-letter code: Putative D-alanyl-D-alanine carboxypeptidase (432 aa).

A helical; Signal-anchor membrane pass occupies residues 7-25; it reads ATVLLTFSLSAFAVEYPVL.

This sequence belongs to the peptidase S12 family. YfeW subfamily.

The protein resides in the cell inner membrane. The enzyme catalyses Preferential cleavage: (Ac)2-L-Lys-D-Ala-|-D-Ala. Also transpeptidation of peptidyl-alanyl moieties that are N-acyl substituents of D-alanine.. The chain is Putative D-alanyl-D-alanine carboxypeptidase from Salmonella paratyphi A (strain ATCC 9150 / SARB42).